The sequence spans 263 residues: MPEGPEIRRAADKLEAAIKGEPLTNVWFAFPQLQPYQTQLTGQRVTHIATRGKALLTHFSGGLTLYSHNQLYGVWRVVDAGVEPQSNRVLRVRLQTASKAILLYSASDIDILTAEQVANHPFLLRVGPDVLDMTLTAEQVKARLLSAKFRNRQFSGLLLDQAFLAGLGNYLRVEILWQVGLSGKRKAAELSDSQLDALAHALLDIPRLSYRTRGLVDDNKHHGALFRFKVFHRDGERCERCGGIIEKTTLSSRPFYWCPGCQH.

Pro2 acts as the Schiff-base intermediate with DNA in catalysis. The active-site Proton donor is the Glu3. Lys53 functions as the Proton donor; for beta-elimination activity in the catalytic mechanism. 3 residues coordinate DNA: Gln70, Arg125, and Asn169. Residues 229–263 (KVFHRDGERCERCGGIIEKTTLSSRPFYWCPGCQH) form an FPG-type zinc finger. The active-site Proton donor; for delta-elimination activity is Arg253.

The protein belongs to the FPG family. Zn(2+) is required as a cofactor.

It catalyses the reaction 2'-deoxyribonucleotide-(2'-deoxyribose 5'-phosphate)-2'-deoxyribonucleotide-DNA = a 3'-end 2'-deoxyribonucleotide-(2,3-dehydro-2,3-deoxyribose 5'-phosphate)-DNA + a 5'-end 5'-phospho-2'-deoxyribonucleoside-DNA + H(+). Its function is as follows. Involved in base excision repair of DNA damaged by oxidation or by mutagenic agents. Acts as a DNA glycosylase that recognizes and removes damaged bases. Has a preference for oxidized pyrimidines, such as thymine glycol, 5,6-dihydrouracil and 5,6-dihydrothymine. Has AP (apurinic/apyrimidinic) lyase activity and introduces nicks in the DNA strand. Cleaves the DNA backbone by beta-delta elimination to generate a single-strand break at the site of the removed base with both 3'- and 5'-phosphates. This chain is Endonuclease 8, found in Klebsiella pneumoniae subsp. pneumoniae (strain ATCC 700721 / MGH 78578).